Reading from the N-terminus, the 67-residue chain is Large ribosomal subunit protein bL32 (67 aa).

Basic residues predominate over residues 1-19 (MAVPKRKMSRSNTRARRSQ). The interval 1–21 (MAVPKRKMSRSNTRARRSQWK) is disordered.

It belongs to the bacterial ribosomal protein bL32 family.

This chain is Large ribosomal subunit protein bL32, found in Clavibacter sepedonicus (Clavibacter michiganensis subsp. sepedonicus).